Reading from the N-terminus, the 832-residue chain is Putative pentatricopeptide repeat-containing protein At5g08310, mitochondrial (832 aa).

Residues 1–27 constitute a mitochondrion transit peptide; the sequence is MAFSRIALLCQRFSRQQQQRQLLHRPL. 19 PPR repeats span residues 105-139, 140-174, 176-212, 213-247, 252-281, 282-316, 317-351, 352-383, 385-415, 438-472, 473-507, 508-542, 543-577, 578-612, 613-647, 648-682, 683-717, 718-752, and 753-787; these read DMYA…RCFM, SPGA…GLCV, NAYT…GFHF, DKFT…GWLD, TILV…DIRL, NYKT…GMNA, DIAL…GIPP, DRGI…IDKK, VMLL…LMGN, DSDS…GLIP, GPMM…GVEP, SQFT…GFEP, WIKH…GFLG, HMVA…GHCP, DVIA…GLKP, TVAT…EKNP, DVIT…DCYP, NRIT…EMEP, and DSAV…GRFP.

This sequence belongs to the PPR family. P subfamily.

The protein localises to the mitochondrion. The polypeptide is Putative pentatricopeptide repeat-containing protein At5g08310, mitochondrial (Arabidopsis thaliana (Mouse-ear cress)).